A 401-amino-acid chain; its full sequence is Argininosuccinate synthase (401 aa).

9–17 serves as a coordination point for ATP; that stretch reads AYSGGLDTS. Residue tyrosine 88 coordinates L-citrulline. Glycine 118 provides a ligand contact to ATP. The L-aspartate site is built by threonine 120, asparagine 124, and aspartate 125. Asparagine 124 serves as a coordination point for L-citrulline. Residues arginine 128, serine 177, serine 186, glutamate 262, and tyrosine 274 each coordinate L-citrulline.

Belongs to the argininosuccinate synthase family. Type 1 subfamily. Homotetramer.

The protein resides in the cytoplasm. It catalyses the reaction L-citrulline + L-aspartate + ATP = 2-(N(omega)-L-arginino)succinate + AMP + diphosphate + H(+). The protein operates within amino-acid biosynthesis; L-arginine biosynthesis; L-arginine from L-ornithine and carbamoyl phosphate: step 2/3. The sequence is that of Argininosuccinate synthase from Chlorobaculum tepidum (strain ATCC 49652 / DSM 12025 / NBRC 103806 / TLS) (Chlorobium tepidum).